Reading from the N-terminus, the 237-residue chain is Protein-S-isoprenylcysteine O-methyltransferase (237 aa).

4 consecutive transmembrane segments (helical) span residues 26 to 46, 53 to 73, 92 to 112, and 116 to 136; these read SSAI…LFIF, FGIY…WVTM, FNMA…FFPS, and FSLW…RSVA. S-adenosyl-L-methionine is bound by residues Gln149, 156 to 159, Tyr164, and 169 to 172; these read HVLV and HPSY. A helical membrane pass occupies residues 184–204; the sequence is VILMNPISIIGFGWASWSFFS. Residue Arg206 coordinates substrate. Position 210 (Glu210) interacts with S-adenosyl-L-methionine.

This sequence belongs to the class VI-like SAM-binding methyltransferase superfamily. Isoprenylcysteine carboxyl methyltransferase family.

The protein localises to the endoplasmic reticulum membrane. It carries out the reaction [protein]-C-terminal S-[(2E,6E)-farnesyl]-L-cysteine + S-adenosyl-L-methionine = [protein]-C-terminal S-[(2E,6E)-farnesyl]-L-cysteine methyl ester + S-adenosyl-L-homocysteine. Methylates the C-terminal cysteine residues of small GTPases and the heterotrimeric G protein gamma subunit in response to cAMP. The methylation is required for intercellular signaling and regulation of cAMP waves propagation. It also seems to induce the activity of car1, a G protein-coupled receptor which senses extracellular cAMP during the aggregation phase of development. The protein is Protein-S-isoprenylcysteine O-methyltransferase (icmt-1) of Dictyostelium discoideum (Social amoeba).